Here is a 239-residue protein sequence, read N- to C-terminus: Peptidyl-tRNA hydrolase (239 aa).

Position 14 (tyrosine 14) interacts with tRNA. Histidine 19 serves as the catalytic Proton acceptor. Phenylalanine 64, asparagine 66, and asparagine 112 together coordinate tRNA. Residues 199-227 form a disordered region; that stretch reads EKPAQKGRSHIRQARPKAPPAELPSSGPM. The segment covering 203–213 has biased composition (basic residues); sequence QKGRSHIRQAR.

It belongs to the PTH family. Monomer.

The protein localises to the cytoplasm. It carries out the reaction an N-acyl-L-alpha-aminoacyl-tRNA + H2O = an N-acyl-L-amino acid + a tRNA + H(+). Hydrolyzes ribosome-free peptidyl-tRNAs (with 1 or more amino acids incorporated), which drop off the ribosome during protein synthesis, or as a result of ribosome stalling. Functionally, catalyzes the release of premature peptidyl moieties from peptidyl-tRNA molecules trapped in stalled 50S ribosomal subunits, and thus maintains levels of free tRNAs and 50S ribosomes. In Chelativorans sp. (strain BNC1), this protein is Peptidyl-tRNA hydrolase.